The chain runs to 517 residues: Crotonobetaine/carnitine--CoA ligase (517 aa).

The protein belongs to the ATP-dependent AMP-binding enzyme family.

The enzyme catalyses 4-(trimethylamino)butanoate + ATP + CoA = 4-(trimethylamino)butanoyl-CoA + AMP + diphosphate. It catalyses the reaction crotonobetaine + ATP + CoA = crotonobetainyl-CoA + AMP + diphosphate. The catalysed reaction is (R)-carnitine + ATP + CoA = (R)-carnitinyl-CoA + AMP + diphosphate. It functions in the pathway amine and polyamine metabolism; carnitine metabolism. In terms of biological role, catalyzes the transfer of CoA to carnitine, generating the initial carnitinyl-CoA needed for the CaiB reaction cycle. Also has activity toward crotonobetaine and gamma-butyrobetaine. The chain is Crotonobetaine/carnitine--CoA ligase from Salmonella typhi.